The following is a 211-amino-acid chain: Protein-L-isoaspartate O-methyltransferase 2 (211 aa).

Residue serine 60 is part of the active site.

It belongs to the methyltransferase superfamily. L-isoaspartyl/D-aspartyl protein methyltransferase family.

It localises to the cytoplasm. It catalyses the reaction [protein]-L-isoaspartate + S-adenosyl-L-methionine = [protein]-L-isoaspartate alpha-methyl ester + S-adenosyl-L-homocysteine. Its function is as follows. Catalyzes the methyl esterification of L-isoaspartyl residues in peptides and proteins that result from spontaneous decomposition of normal L-aspartyl and L-asparaginyl residues. It plays a role in the repair and/or degradation of damaged proteins. The polypeptide is Protein-L-isoaspartate O-methyltransferase 2 (Nitrosospira multiformis (strain ATCC 25196 / NCIMB 11849 / C 71)).